The following is a 368-amino-acid chain: Transcription factor TGA7 (368 aa).

Positions 70-82 (HNQIEAEQPSSND) are enriched in polar residues. A disordered region spans residues 70–89 (HNQIEAEQPSSNDNQDDDGR). One can recognise a bZIP domain in the interval 91-151 (HDKMKRRLAQ…LGPSGSINTG (61 aa)). 2 coiled-coil regions span residues 92–142 (DKMK…QGHL) and 252–285 (DQQI…SLAE). The tract at residues 93–113 (KMKRRLAQNREAARKSRLRKK) is basic motif. A leucine-zipper region spans residues 119 to 133 (LEESRLKLSQLEQEL). One can recognise a DOG1 domain in the interval 152–363 (IASFEMEYSH…RALSSLWAAR (212 aa)).

It belongs to the bZIP family. As to quaternary structure, binds DNA as a dimer. Interacts with NPR1 and NPR4. Interacts with GRXC7/ROXY1.

The protein resides in the nucleus. Transcriptional activator that binds specifically to the DNA sequence 5'-TGACG-3'. Recognizes ocs elements like the as-1 motif of the cauliflower mosaic virus 35S promoter. Binding to the as-1-like cis elements mediate auxin- and salicylic acid-inducible transcription. May be involved in the induction of the systemic acquired resistance (SAR) via its interaction with NPR1. The sequence is that of Transcription factor TGA7 (TGA7) from Arabidopsis thaliana (Mouse-ear cress).